A 727-amino-acid polypeptide reads, in one-letter code: Polyribonucleotide nucleotidyltransferase (727 aa).

Mg(2+) contacts are provided by Asp491 and Asp497. Residues 558-617 (PRIITASIHPDKIREVIGPGGKTIKKIIDETGVKIDIEDDGRVFISAVDGEAGENALKII) enclose the KH domain. Residues 627–701 (GRIYNGRVTR…KQGRLNLSRK (75 aa)) form the S1 motif domain. The disordered stretch occupies residues 698 to 727 (LSRKEALPNPNPSSNPNPNGITANRNPRNS). Residues 717-727 (GITANRNPRNS) show a composition bias toward polar residues.

The protein belongs to the polyribonucleotide nucleotidyltransferase family. Requires Mg(2+) as cofactor.

The protein resides in the cytoplasm. It carries out the reaction RNA(n+1) + phosphate = RNA(n) + a ribonucleoside 5'-diphosphate. Involved in mRNA degradation. Catalyzes the phosphorolysis of single-stranded polyribonucleotides processively in the 3'- to 5'-direction. The chain is Polyribonucleotide nucleotidyltransferase from Desulfitobacterium hafniense (strain Y51).